A 92-amino-acid polypeptide reads, in one-letter code: RIIa domain-containing protein 1 (92 aa).

The region spanning 43 to 77 (KEVELLISGFFREMFLKRPDNIPEFAADYFTDPRL) is the RIIa domain.

The protein is RIIa domain-containing protein 1 (RIIAD1) of Bos taurus (Bovine).